Consider the following 846-residue polypeptide: Arsenate respiratory reductase molybdopterin-containing subunit ArrA (846 aa).

The segment at residues 1 to 29 (MRIKRREFLKASAAVGAVAVASPTLNAFA) is a signal peptide (tat-type signal). The 4Fe-4S Mo/W bis-MGD-type domain occupies 43–99 (GKWIPSTCQGCTTWCPVEFLFRMAVRSKYAATQLSKANNGYCCVRGHLMLQQLYDPD). [4Fe-4S] cluster contacts are provided by Cys50, Cys53, Cys57, and Cys85. Residue Arg155 participates in arsenite binding. Residue Tyr156 participates in arsenate binding. Position 179 (His179) interacts with arsenite. Ser180 is a binding site for arsenate. Cys183 is a binding site for Mo-bis(molybdopterin guanine dinucleotide). Lys188 contacts arsenate. Tyr200 lines the arsenite pocket.

Belongs to the prokaryotic molybdopterin-containing oxidoreductase family. Heterodimer composed of one large subunit (ArrA) and one small subunit (ArrB). It depends on [4Fe-4S] cluster as a cofactor. Requires Mo-bis(molybdopterin guanine dinucleotide) as cofactor. Predicted to be exported by the Tat system. The position of the signal peptide cleavage has been experimentally proven.

It localises to the periplasm. The catalysed reaction is arsenite + A + H2O = arsenate + AH2 + H(+). Its function is as follows. Component of the arsenate respiratory reductase (Arr) complex, which catalyzes the reduction of arsenate (As(V)) to arsenite (As(III)). Can use acetate as the electron donor. ArrA is the arsenate-binding subunit. The chain is Arsenate respiratory reductase molybdopterin-containing subunit ArrA from Chrysiogenes arsenatis.